The chain runs to 242 residues: DNA repair protein RecO (242 aa).

Belongs to the RecO family. In terms of assembly, monomer.

Functionally, involved in DNA repair and RecF pathway recombination. The sequence is that of DNA repair protein RecO from Salmonella gallinarum (strain 287/91 / NCTC 13346).